Here is an 80-residue protein sequence, read N- to C-terminus: Ubiquitin-like protein NEDD8-like protein 2 (80 aa).

Belongs to the ubiquitin family.

The sequence is that of Ubiquitin-like protein NEDD8-like protein 2 (nedd8l2) from Dictyostelium discoideum (Social amoeba).